The primary structure comprises 143 residues: Nitrosuccinic acid decarboxylase npaB (143 aa).

Belongs to the carboxymuconolactone decarboxylase family. The cofactor is Mg(2+).

Its pathway is mycotoxin biosynthesis. In terms of biological role, nitrosuccinic acid decarboxylase; part of the gene cluster that mediates the biosynthesis of the deadly neurotoxic nitroalkane 3-nitropropanoic acid (3-NPA) that acts as an antimetabolite of succinate and irreversibly inhibits succinate dehydrogenase and disrupts mitochondrial oxidative phosphorylation. NpaB facilitates decarboxylation of nitrosuccinic acid produced by the nitrosuccinic acid synthase npaA to yield the final product of the cluster, the lethal mycotoxin 3-NPA. This is Nitrosuccinic acid decarboxylase npaB from Metarhizium robertsii (strain ARSEF 23 / ATCC MYA-3075) (Metarhizium anisopliae (strain ARSEF 23)).